A 328-amino-acid polypeptide reads, in one-letter code: N-acyl-aromatic-L-amino acid amidohydrolase (carboxylate-forming) A (328 aa).

Positions 30 and 33 each coordinate Zn(2+). Substrate contacts are provided by residues arginine 74 and asparagine 81–arginine 82. Histidine 127 contacts Zn(2+). Substrate is bound by residues glutamate 189 and tyrosine 300.

This sequence belongs to the AspA/AstE family. Aspartoacylase subfamily. As to quaternary structure, homotetramer. The cofactor is Zn(2+).

The protein localises to the apical cell membrane. Its subcellular location is the cytoplasm. It carries out the reaction an N-acyl-aromatic L-alpha-amino acid + H2O = an aromatic L-alpha-amino acid + a carboxylate. The catalysed reaction is an N-acetyl-L-cysteine-S-conjugate + H2O = an S-substituted L-cysteine + acetate. In terms of biological role, plays an important role in deacetylating mercapturic acids in kidney proximal tubules. This is N-acyl-aromatic-L-amino acid amidohydrolase (carboxylate-forming) A (acy3.1) from Danio rerio (Zebrafish).